The following is a 201-amino-acid chain: LexA repressor (201 aa).

A DNA-binding region (H-T-H motif) is located at residues 28-48; that stretch reads RAEIAARLGFRSPNAAEEHLK. Residues serine 118 and lysine 155 each act as for autocatalytic cleavage activity in the active site.

The protein belongs to the peptidase S24 family. As to quaternary structure, homodimer.

The catalysed reaction is Hydrolysis of Ala-|-Gly bond in repressor LexA.. Its function is as follows. Represses a number of genes involved in the response to DNA damage (SOS response), including recA and lexA. In the presence of single-stranded DNA, RecA interacts with LexA causing an autocatalytic cleavage which disrupts the DNA-binding part of LexA, leading to derepression of the SOS regulon and eventually DNA repair. The sequence is that of LexA repressor from Photorhabdus laumondii subsp. laumondii (strain DSM 15139 / CIP 105565 / TT01) (Photorhabdus luminescens subsp. laumondii).